The primary structure comprises 131 residues: D-ribose pyranase (131 aa).

The Proton donor role is filled by His-20. Residues Asp-28, His-98, and 120–122 (YAN) each bind substrate.

Belongs to the RbsD / FucU family. RbsD subfamily. As to quaternary structure, homodecamer.

The protein resides in the cytoplasm. It catalyses the reaction beta-D-ribopyranose = beta-D-ribofuranose. Its pathway is carbohydrate metabolism; D-ribose degradation; D-ribose 5-phosphate from beta-D-ribopyranose: step 1/2. Functionally, catalyzes the interconversion of beta-pyran and beta-furan forms of D-ribose. The sequence is that of D-ribose pyranase from Symbiobacterium thermophilum (strain DSM 24528 / JCM 14929 / IAM 14863 / T).